Consider the following 198-residue polypeptide: MFEGPRRYRRPRTRFLSKQLTALRELLEKTMHPSLATMGKLASKLQLDLSVVKIWFKNQRAKWKRQQRQQMQTRPSLGPANQTTSVKKEETPSAITTANIRPVSPGISDANDHDLREPSGIKNPGGASASARVSSWDSQSYDIEQICLGASNPPWASTLFEIDEFVKIYDLPGEDDTSSLNQYLFPVCLEYDQLQSSV.

A DNA-binding region (homeobox) is located at residues 33–67 (PSLATMGKLASKLQLDLSVVKIWFKNQRAKWKRQQ). The interval 65–133 (RQQRQQMQTR…PGGASASARV (69 aa)) is disordered. The segment at 79–190 (PANQTTSVKK…NQYLFPVCLE (112 aa)) is LEUTX region. Basic and acidic residues predominate over residues 110 to 119 (ANDHDLREPS). 4 consecutive short sequence motifs (9aaTAD) follow at residues 125 to 136 (GGASASARVSSW), 153 to 161 (PPWASTLFE), 163 to 171 (DEFVKIYDL), and 178 to 186 (SSLNQYLFP).

This sequence belongs to the paired homeobox family.

Its subcellular location is the nucleus. Its function is as follows. Paired-like homeobox transcription factor involved in embryogenesis. May act as a regulator of embryo genome activation. Binds to a 36 bp DNA elements containing a 5'-TAATCC-3' sequence motif, referred to as EEA motif (EGA-enriched Alu-motif), present in the promoters of target genes activated in early embryos. In terms of biological role, inactive transcriptional activity. The polypeptide is Paired-like homeodomain transcription factor LEUTX (Homo sapiens (Human)).